Here is a 28-residue protein sequence, read N- to C-terminus: Putative antitoxin AF_1079 (28 aa).

The protein belongs to the UPF0165 family.

Its function is as follows. Possibly the antitoxin component of a type II toxin-antitoxin (TA) system. The polypeptide is Putative antitoxin AF_1079 (Archaeoglobus fulgidus (strain ATCC 49558 / DSM 4304 / JCM 9628 / NBRC 100126 / VC-16)).